A 287-amino-acid polypeptide reads, in one-letter code: MSFRDKLDVYMRLARMDRPIGTLLLLWPCLMALTFAAGGLPDLKVFIIFVIGVVVMRACGCIINDYADRDLDSHVERTKARPLASGEISSKEALLLFGVMGLFAFSLVLMLNPLVVQLSVVGIILTIIYPFTKRYTNMPQMFLGTVWSWSIPMAYAAQTGTVPIEAWWLFAANWCWTVAYDTMYAMVDRDDDLKVGIKSTAILFGRYDRQIIAAFQLAALSCFIIAGMLAGRGEIYGLGILAFIGFAVYQQKLIYGRERGPCFTAFLNNNWAGMVLYIALTLDYLIL.

The next 5 membrane-spanning stretches (helical) occupy residues 35–55, 96–116, 211–231, 235–255, and 262–282; these read FAAG…GVVV, LFGV…PLVV, IIAA…MLAG, IYGL…KLIY, and CFTA…ALTL.

Belongs to the UbiA prenyltransferase family. It depends on Mg(2+) as a cofactor.

The protein resides in the cell inner membrane. The catalysed reaction is all-trans-octaprenyl diphosphate + 4-hydroxybenzoate = 4-hydroxy-3-(all-trans-octaprenyl)benzoate + diphosphate. The protein operates within cofactor biosynthesis; ubiquinone biosynthesis. Functionally, catalyzes the prenylation of para-hydroxybenzoate (PHB) with an all-trans polyprenyl group. Mediates the second step in the final reaction sequence of ubiquinone-8 (UQ-8) biosynthesis, which is the condensation of the polyisoprenoid side chain with PHB, generating the first membrane-bound Q intermediate 3-octaprenyl-4-hydroxybenzoate. The chain is 4-hydroxybenzoate octaprenyltransferase from Shewanella halifaxensis (strain HAW-EB4).